The chain runs to 161 residues: MSTLTHFNAKGEAHMVDVGDKSVTHRVAVAEGHITMEPETLALIRSGTHKKGDVLGIARVAGIMASKKTSELVPLCHPISLTHVEVELSTADSPPSVHCRVTAETRGQTGVEMEALTAVQVALLTVYDMCKAVDRFMTMGGVRLVHKSGGKSGTWDLKGSG.

Residues 75–77 (LCH) and 113–114 (ME) contribute to the substrate site. D128 is a catalytic residue.

It belongs to the MoaC family. In terms of assembly, homohexamer; trimer of dimers.

The enzyme catalyses (8S)-3',8-cyclo-7,8-dihydroguanosine 5'-triphosphate = cyclic pyranopterin phosphate + diphosphate. Its pathway is cofactor biosynthesis; molybdopterin biosynthesis. Its function is as follows. Catalyzes the conversion of (8S)-3',8-cyclo-7,8-dihydroguanosine 5'-triphosphate to cyclic pyranopterin monophosphate (cPMP). The chain is Cyclic pyranopterin monophosphate synthase from Thioalkalivibrio sulfidiphilus (strain HL-EbGR7).